The following is a 487-amino-acid chain: Neuronal immunoglobulin domain-containing protein rig-3 (487 aa).

An N-terminal signal peptide occupies residues M1–A23. 2 Ig-like domains span residues P34–K139 and P247–T354. Cystine bridges form between C61–C124 and C271–C327. D466 carries GPI-anchor amidated aspartate lipidation. A propeptide spans S467–I487 (removed in mature form).

Expressed in the cholinergic motor neurons AS, VA and DA in the ventral nerve cord and in the mechanosensory ALM neurons in the midbody.

It is found in the cell projection. The protein localises to the axon. It localises to the synapse. Its subcellular location is the cell membrane. In terms of biological role, cell surface protein which plays a role in the plasticity of cholinergic synapses at neuromuscular junctions and in the polarity of the mechanosensory neuron ALM, possibly by antagonizing Wnt signaling. The polypeptide is Neuronal immunoglobulin domain-containing protein rig-3 (Caenorhabditis elegans).